A 325-amino-acid polypeptide reads, in one-letter code: Tetraacyldisaccharide 4'-kinase (325 aa).

55 to 62 serves as a coordination point for ATP; it reads TAGGNGKT.

It belongs to the LpxK family.

It carries out the reaction a lipid A disaccharide + ATP = a lipid IVA + ADP + H(+). It participates in glycolipid biosynthesis; lipid IV(A) biosynthesis; lipid IV(A) from (3R)-3-hydroxytetradecanoyl-[acyl-carrier-protein] and UDP-N-acetyl-alpha-D-glucosamine: step 6/6. Its function is as follows. Transfers the gamma-phosphate of ATP to the 4'-position of a tetraacyldisaccharide 1-phosphate intermediate (termed DS-1-P) to form tetraacyldisaccharide 1,4'-bis-phosphate (lipid IVA). The polypeptide is Tetraacyldisaccharide 4'-kinase (Salmonella enteritidis PT4 (strain P125109)).